We begin with the raw amino-acid sequence, 283 residues long: Protein-S-isoprenylcysteine O-methyltransferase (283 aa).

Residues 1 to 15 are Cytoplasmic-facing; it reads MAAARRGSAGSEARL. A helical transmembrane segment spans residues 16-32; sequence SLATFLLGASVLALPLL. Topologically, residues 33–40 are lumenal; that stretch reads TRAGLQGR. Residues 41–58 form a helical membrane-spanning segment; sequence TGLALYVAGLNALLLLLY. At 59–68 the chain is on the cytoplasmic side; sequence RPPRYQIAIR. Residues 69-86 traverse the membrane as a helical segment; sequence ACFLGFVFGCGVLLSFSQ. Over 87–91 the chain is Lumenal; it reads SSWNH. Residues 92–111 traverse the membrane as a helical segment; the sequence is FGWYVCSLSLFHYSEYLVTA. Over 112-130 the chain is Cytoplasmic; it reads VNNPKSLSLDSFLLNHSLE. Residues 131 to 148 form a helical membrane-spanning segment; it reads YTVAALSSWIEFTLENIF. Topologically, residues 149–153 are lumenal; it reads WPELK. A helical transmembrane segment spans residues 154-173; it reads QITWLSATGLLMVVFGECLR. Over 174-211 the chain is Cytoplasmic; sequence KAAMFTAGSNFNHVVQSEKSDTHTLVTSGVYAWCRHPS. Residues Q189, 196 to 199, Y204, and 209 to 212 each bind S-adenosyl-L-methionine; these read HTLV and HPSY. The chain crosses the membrane as a helical span at residues 212–227; that stretch reads YVGWFYWSIGTQVMLC. Residue N228 is a topological domain, lumenal. The helical transmembrane segment at 229–243 threads the bilayer; sequence PICGVVYALTVWRFF. Topologically, residues 244–283 are cytoplasmic; that stretch reads RDRTEEEEISLIHFFGEEYLDYKKRVPTGLPFIKGVKVEL. R246 lines the substrate pocket. Position 250 (E250) interacts with S-adenosyl-L-methionine.

This sequence belongs to the class VI-like SAM-binding methyltransferase superfamily. Isoprenylcysteine carboxyl methyltransferase family. In terms of tissue distribution, highly enriched in adult cerebellum, with a low level expression in other brain regions.

The protein resides in the endoplasmic reticulum membrane. It carries out the reaction [protein]-C-terminal S-[(2E,6E)-farnesyl]-L-cysteine + S-adenosyl-L-methionine = [protein]-C-terminal S-[(2E,6E)-farnesyl]-L-cysteine methyl ester + S-adenosyl-L-homocysteine. Functionally, catalyzes the post-translational methylation of isoprenylated C-terminal cysteine residues. The sequence is that of Protein-S-isoprenylcysteine O-methyltransferase (Icmt) from Mus musculus (Mouse).